A 307-amino-acid polypeptide reads, in one-letter code: tRNA pseudouridine synthase B (307 aa).

Asp-38 functions as the Nucleophile in the catalytic mechanism.

It belongs to the pseudouridine synthase TruB family. Type 1 subfamily.

The catalysed reaction is uridine(55) in tRNA = pseudouridine(55) in tRNA. In terms of biological role, responsible for synthesis of pseudouridine from uracil-55 in the psi GC loop of transfer RNAs. The protein is tRNA pseudouridine synthase B of Bacillus cytotoxicus (strain DSM 22905 / CIP 110041 / 391-98 / NVH 391-98).